Reading from the N-terminus, the 508-residue chain is GMP synthase [glutamine-hydrolyzing] (508 aa).

In terms of domain architecture, Glutamine amidotransferase type-1 spans 1-189 (MIVVLDFGSQ…ALLVCGCEKT (189 aa)). The active-site Nucleophile is the Cys78. Active-site residues include His163 and Glu165. The region spanning 190–383 (WGMQNFAQKE…LGVSQDFLMR (194 aa)) is the GMPS ATP-PPase domain. 217-223 (SGGVDST) contributes to the ATP binding site.

In terms of assembly, homodimer.

It carries out the reaction XMP + L-glutamine + ATP + H2O = GMP + L-glutamate + AMP + diphosphate + 2 H(+). It participates in purine metabolism; GMP biosynthesis; GMP from XMP (L-Gln route): step 1/1. In terms of biological role, catalyzes the synthesis of GMP from XMP. The polypeptide is GMP synthase [glutamine-hydrolyzing] (Helicobacter acinonychis (strain Sheeba)).